Consider the following 203-residue polypeptide: Twist-related protein 1 (203 aa).

Residues 1–18 (MMQDVSSSPVSPADDSLS) are compositionally biased toward low complexity. The disordered stretch occupies residues 1-106 (MMQDVSSSPV…GGGSPQSYEE (106 aa)). Positions 34–43 (RGGRKRRSSS) are enriched in basic residues. Composition is skewed to gly residues over residues 47–66 (AGGG…GGDE) and 81–100 (GCGG…GGGS). A bHLH domain is found at 109 to 160 (TQRVMANVRERQRTQSLNEAFAALRKIIPTLPSDKLSKIQTLKLAARYIDFL). The tract at residues 162–192 (QVLQSDELDSKMASCSYVAHERLSYAFSVWR) is sufficient for transactivation activity.

In terms of assembly, efficient DNA binding requires dimerization with another bHLH protein. Homodimer or heterodimer with E proteins such as TCF3. ID1 binds preferentially to TCF3 but does not interact efficiently with TWIST1 so ID1 levels control the amount of TCF3 available to dimerize with TWIST and thus determine the type of dimer formed.

It localises to the nucleus. In terms of biological role, acts as a transcriptional regulator. Inhibits myogenesis by sequestrating E proteins, inhibiting trans-activation by MEF2, and inhibiting DNA-binding by MYOD1 through physical interaction. This interaction probably involves the basic domains of both proteins. Also represses expression of pro-inflammatory cytokines such as TNFA and IL1B. Regulates cranial suture patterning and fusion. Activates transcription as a heterodimer with E proteins. Regulates gene expression differentially, depending on dimer composition. Homodimers induce expression of FGFR2 and POSTN while heterodimers repress FGFR2 and POSTN expression and induce THBS1 expression. Heterodimerization is also required for osteoblast differentiation. Represses the activity of the circadian transcriptional activator: NPAS2-BMAL1 heterodimer. The chain is Twist-related protein 1 (TWIST1) from Pongo pygmaeus (Bornean orangutan).